A 193-amino-acid chain; its full sequence is ATP-dependent Clp protease proteolytic subunit 1 (193 aa).

The active-site Nucleophile is the Ser-99. The active site involves His-124.

Belongs to the peptidase S14 family. In terms of assembly, fourteen ClpP subunits assemble into 2 heptameric rings which stack back to back to give a disk-like structure with a central cavity, resembling the structure of eukaryotic proteasomes.

It localises to the cytoplasm. The catalysed reaction is Hydrolysis of proteins to small peptides in the presence of ATP and magnesium. alpha-casein is the usual test substrate. In the absence of ATP, only oligopeptides shorter than five residues are hydrolyzed (such as succinyl-Leu-Tyr-|-NHMec, and Leu-Tyr-Leu-|-Tyr-Trp, in which cleavage of the -Tyr-|-Leu- and -Tyr-|-Trp bonds also occurs).. Functionally, cleaves peptides in various proteins in a process that requires ATP hydrolysis. Has a chymotrypsin-like activity. Plays a major role in the degradation of misfolded proteins. The sequence is that of ATP-dependent Clp protease proteolytic subunit 1 from Shouchella clausii (strain KSM-K16) (Alkalihalobacillus clausii).